A 252-amino-acid chain; its full sequence is LexA repressor (252 aa).

Residues 1 to 46 (MPEENRGGHQPYTEESSVSALHPVRTDDSVGSSAEQTGDAPTLTER) form a disordered region. The segment at residues 67-87 (IREIGEAVGLSSPSSVAHQLK) is a DNA-binding region (H-T-H motif). Active-site for autocatalytic cleavage activity residues include serine 176 and lysine 213.

Belongs to the peptidase S24 family. In terms of assembly, homodimer.

It carries out the reaction Hydrolysis of Ala-|-Gly bond in repressor LexA.. Its function is as follows. Represses a number of genes involved in the response to DNA damage (SOS response), including recA and lexA. In the presence of single-stranded DNA, RecA interacts with LexA causing an autocatalytic cleavage which disrupts the DNA-binding part of LexA, leading to derepression of the SOS regulon and eventually DNA repair. In Thermobifida fusca (strain YX), this protein is LexA repressor.